The sequence spans 434 residues: MAKIGFVSLGCPKALVDSEQILSRLKALGYETSPSYEEAELVIVNTCGFINEAVEESLEVIGEALKENGKVVVTGCLGARPEKIRERHPQVLAITGPGEVERVLEAVQVVLPAPRDPFLDLIPPQVKLTPRHYAYVKLSEGCDHRCSFCIIPKLRGRLRSRDAADVLAEAARLVATGTKELLLVAQDLSAYGVDLGHRESLWGDRPVRAELKDLLAHMAELGAWIRLHYVYPYPHVKDLLPLMAEGKVLPYLDVPLQHASPRILRLMRRPGGYESHLKALKAWREVVPELALRSTFIVGFPGETEEDFQILLDFLEEAELDRVGVFAYSPVEGAEANRLPDPVPEEVKEERKARLLELQARVSLRKNQRFVGKTLEVLVDELPEPGLAVGRTYRDSPGIDGVVYVETDGTVRVGERIPVRILRADTYDLHGVQA.

The region spanning 2-112 is the MTTase N-terminal domain; the sequence is AKIGFVSLGC…VLEAVQVVLP (111 aa). 6 residues coordinate [4Fe-4S] cluster: Cys11, Cys47, Cys76, Cys142, Cys146, and Cys149. Positions 128–365 constitute a Radical SAM core domain; that stretch reads LTPRHYAYVK…LELQARVSLR (238 aa). The region spanning 368–434 is the TRAM domain; that stretch reads QRFVGKTLEV…DTYDLHGVQA (67 aa).

The protein belongs to the methylthiotransferase family. RimO subfamily. [4Fe-4S] cluster serves as cofactor.

Its subcellular location is the cytoplasm. The enzyme catalyses L-aspartate(89)-[ribosomal protein uS12]-hydrogen + (sulfur carrier)-SH + AH2 + 2 S-adenosyl-L-methionine = 3-methylsulfanyl-L-aspartate(89)-[ribosomal protein uS12]-hydrogen + (sulfur carrier)-H + 5'-deoxyadenosine + L-methionine + A + S-adenosyl-L-homocysteine + 2 H(+). Its function is as follows. Catalyzes the methylthiolation of an aspartic acid residue of ribosomal protein uS12. The polypeptide is Ribosomal protein uS12 methylthiotransferase RimO (Thermus thermophilus (strain ATCC 27634 / DSM 579 / HB8)).